Here is a 141-residue protein sequence, read N- to C-terminus: Cystatin (141 aa).

Residues 1–26 (MVHSQLPVVALLRLLCALLLLPSATM) form the signal peptide. Residues 29–129 (GGLSPRSVTD…CRFQVWSRPW (101 aa)) enclose the Cystatin domain. Residues 73-77 (QVVAG) carry the Secondary area of contact motif. Disulfide bonds link cysteine 91/cysteine 107 and cysteine 120/cysteine 140.

This sequence belongs to the cystatin family. Expressed at a low level by the venom gland (at protein level).

It localises to the secreted. In terms of biological role, inhibits various C1 cysteine proteases including cathepsin L, papain and cathepsin B. This protein has no toxic activity and its function in the venom is unknown. It may play a role as a housekeeping or regulatory protein. The polypeptide is Cystatin (Notechis scutatus scutatus (Mainland tiger snake)).